The primary structure comprises 688 residues: MARKYPLDKFRNFGIMAHIDAGKTTTTERILFYTGINHKIGETHDGASTMDWMVQEQERGITITSAATTCAWKEHELNIIDTPGHVDFTVEVERSLRVLDGAVTVLDAKSGVEPQTETVWRQADKYGVPRMIYVNKMDATGADFFRCISTVRDRLKGNAVPIQIPIGSEENFQGMIDLIRNVAILFYDDLGKDMREEAIPAEYAEKAEEYRAAMIEAIAEADEELMMKYLEGEEITEEELKAGLRKATIANEIYPCICGSSYKNKGVQQMIDGVVDYLPSPLDIPAVKGTNLEGEEAERNAADGEPLSALAFKIATDPFVGKLAYTRIYSGIMESGSYVLNSTKGKKERIGRLVKMHSNSRQEVESLEAGELGAVIGLKNTGTGDTLCSEKDPIILESMEFPEPVISVAIEPKTKAAQEKMGMALAKLAEEDPTFKTWTNEETGQTIIAGMGELHLDIIVDRLKREFKVECNVGAPQVAYKETIRKAVKAEAKYAKQSGGKGQYGHAVIEMEPTEGEYVFENAIVGGAIPREYIPAVDNGIQEASLNGIIAGYNVINFKVRLVHGSYHEVDSSEMAFKIAGSMAFKNAMAKADPVLLEPVEKVEITVPEEYMGDVIGDVNSRRGRMEGMEEVSGAQVIRAFVPLSEMFGYATSLRSRTQGRGVYSMVFDHYEEVPKSIQEEVAGNKTK.

In terms of domain architecture, tr-type G spans 8-282 (DKFRNFGIMA…GVVDYLPSPL (275 aa)). GTP contacts are provided by residues 17–24 (AHIDAGKT), 81–85 (DTPGH), and 135–138 (NKMD).

Belongs to the TRAFAC class translation factor GTPase superfamily. Classic translation factor GTPase family. EF-G/EF-2 subfamily.

It is found in the cytoplasm. In terms of biological role, catalyzes the GTP-dependent ribosomal translocation step during translation elongation. During this step, the ribosome changes from the pre-translocational (PRE) to the post-translocational (POST) state as the newly formed A-site-bound peptidyl-tRNA and P-site-bound deacylated tRNA move to the P and E sites, respectively. Catalyzes the coordinated movement of the two tRNA molecules, the mRNA and conformational changes in the ribosome. The polypeptide is Elongation factor G (Clostridium botulinum (strain Eklund 17B / Type B)).